The chain runs to 719 residues: Putative RNA-binding protein involved in heterochromatin assembly (719 aa).

Positions K226–V322 constitute an RRM domain. S345 carries the phosphoserine modification. The segment at R355 to S384 adopts a RanBP2-type 1 zinc-finger fold. Residues H389–N415 form a disordered region. The span at N392 to N415 shows a compositional bias: low complexity. The residue at position 455 (S455) is a Phosphoserine. Residues N511 to N561 form a disordered region. The RanBP2-type 2 zinc-finger motif lies at R581–I610. Over residues D622 to G649 the composition is skewed to polar residues. A disordered region spans residues D622–I661. The residue at position 630 (S630) is a Phosphoserine. The segment covering D652 to I661 has biased composition (basic and acidic residues).

It localises to the chromosome. The protein localises to the nucleus. Its function is as follows. May play a role in chromatin organization. The protein is Putative RNA-binding protein involved in heterochromatin assembly of Saccharomyces cerevisiae (strain ATCC 204508 / S288c) (Baker's yeast).